We begin with the raw amino-acid sequence, 261 residues long: Carbonic anhydrase 1 (261 aa).

Alanine 2 is modified (N-acetylalanine). One can recognise an Alpha-carbonic anhydrase domain in the interval 4–261 (PDWGYDGENG…LKGRTVKASF (258 aa)). The tract at residues 22-41 (PIANGNNQSPIDIKTSETKR) is disordered. The active-site Proton donor/acceptor is the histidine 65. Zn(2+)-binding residues include histidine 95, histidine 97, and histidine 120. Substrate contacts are provided by residues threonine 200 and 200 to 201 (TH).

Belongs to the alpha-carbonic anhydrase family. Zn(2+) serves as cofactor.

It is found in the cytoplasm. It carries out the reaction hydrogencarbonate + H(+) = CO2 + H2O. The catalysed reaction is urea = cyanamide + H2O. With respect to regulation, inhibited by acetazolamide. Functionally, catalyzes the reversible hydration of carbon dioxide. Can hydrate cyanamide to urea. The chain is Carbonic anhydrase 1 (CA1) from Ovis aries (Sheep).